The sequence spans 361 residues: Prostaglandin E2 receptor EP2 subtype (361 aa).

The span at 1–10 (MGSISNNSGS) shows a compositional bias: polar residues. The interval 1 to 21 (MGSISNNSGSEDCESREWLPS) is disordered. Residues 1-23 (MGSISNNSGSEDCESREWLPSGE) are Extracellular-facing. A glycan (N-linked (GlcNAc...) asparagine) is linked at N6. Residues 24–47 (SPAISSAMFSAGVLGNLIALALLA) traverse the membrane as a helical segment. Over 48–65 (RRWRGDAGRRAGRGNSIS) the chain is Cytoplasmic. Residues 66–91 (LFHVLVTELVFTDLLGTCLISPVVLA) traverse the membrane as a helical segment. At 92-111 (SYARNQTLMALEPERRACTY) the chain is on the extracellular side. Residue N96 is glycosylated (N-linked (GlcNAc...) asparagine). An intrachain disulfide couples C109 to C187. The chain crosses the membrane as a helical span at residues 112–132 (FAFAMTFFSLATMLMLFAMAL). Over 133-151 (ERYLSIGRPYFYQRHVTRR) the chain is Cytoplasmic. Residues 152–176 (GGLAVLPTIYTVSLLFCSLPLLGYG) form a helical membrane-spanning segment. Topologically, residues 177-198 (QYVQYCPGTWCFIRHGRTAYLQ) are extracellular. A helical membrane pass occupies residues 199 to 223 (LYATLLLLLIVAVLACNFSVILNLI). Topologically, residues 224-262 (RMHRRSGRSRCGPSLGSCRDGSGTRRRGERVSVAEETDH) are cytoplasmic. Residues 230 to 253 (GRSRCGPSLGSCRDGSGTRRRGER) form a disordered region. Residues 263 to 286 (LILLAIMTITFAICSLPFTIFAYM) form a helical membrane-spanning segment. An N-linked (GlcNAc...) asparagine glycan is attached at N287. Topologically, residues 287 to 299 (NETSSRREKWDLQ) are extracellular. Residues 300–323 (ALRFLSINSIIDPWVFAIFRPPVL) traverse the membrane as a helical segment. The Cytoplasmic portion of the chain corresponds to 324-361 (RLMRSVLCCRVSLRAQDATQTSCSIQSNASRLTFVDTS).

This sequence belongs to the G-protein coupled receptor 1 family.

It is found in the cell membrane. Its function is as follows. Receptor for prostaglandin E2 (PGE2). The activity of this receptor is mediated by G(s) proteins that stimulate adenylate cyclase. The subsequent raise in intracellular cAMP is responsible for the relaxing effect of this receptor on smooth muscle. The sequence is that of Prostaglandin E2 receptor EP2 subtype (PTGER2) from Canis lupus familiaris (Dog).